Here is a 316-residue protein sequence, read N- to C-terminus: 2,3-dihydroxyphenylpropionate/2,3-dihydroxicinnamic acid 1,2-dioxygenase (316 aa).

The active-site Proton donor is the H118. H182 acts as the Proton acceptor in catalysis.

This sequence belongs to the LigB/MhpB extradiol dioxygenase family. As to quaternary structure, homotetramer. Fe(2+) is required as a cofactor.

It carries out the reaction 3-(2,3-dihydroxyphenyl)propanoate + O2 = (2Z,4E)-2-hydroxy-6-oxonona-2,4-dienedioate + H(+). The enzyme catalyses (2E)-3-(2,3-dihydroxyphenyl)prop-2-enoate + O2 = (2Z,4E,7E)-2-hydroxy-6-oxonona-2,4,7-trienedioate + H(+). The protein operates within aromatic compound metabolism; 3-phenylpropanoate degradation. Functionally, catalyzes the non-heme iron(II)-dependent oxidative cleavage of 2,3-dihydroxyphenylpropionic acid and 2,3-dihydroxicinnamic acid into 2-hydroxy-6-ketononadienedioate and 2-hydroxy-6-ketononatrienedioate, respectively. This Mycolicibacterium vanbaalenii (strain DSM 7251 / JCM 13017 / BCRC 16820 / KCTC 9966 / NRRL B-24157 / PYR-1) (Mycobacterium vanbaalenii) protein is 2,3-dihydroxyphenylpropionate/2,3-dihydroxicinnamic acid 1,2-dioxygenase.